Here is a 491-residue protein sequence, read N- to C-terminus: UDP-N-acetylmuramate--L-alanine ligase (491 aa).

Residue 126–132 participates in ATP binding; it reads GTHGKTT.

This sequence belongs to the MurCDEF family.

It localises to the cytoplasm. It carries out the reaction UDP-N-acetyl-alpha-D-muramate + L-alanine + ATP = UDP-N-acetyl-alpha-D-muramoyl-L-alanine + ADP + phosphate + H(+). The protein operates within cell wall biogenesis; peptidoglycan biosynthesis. In terms of biological role, cell wall formation. In Shigella sonnei (strain Ss046), this protein is UDP-N-acetylmuramate--L-alanine ligase.